We begin with the raw amino-acid sequence, 138 residues long: Putative pre-16S rRNA nuclease (138 aa).

The protein belongs to the YqgF nuclease family.

It localises to the cytoplasm. In terms of biological role, could be a nuclease involved in processing of the 5'-end of pre-16S rRNA. The chain is Putative pre-16S rRNA nuclease from Citrobacter koseri (strain ATCC BAA-895 / CDC 4225-83 / SGSC4696).